We begin with the raw amino-acid sequence, 777 residues long: Reticulon-1 (777 aa).

4 disordered regions span residues 1–77 (MAAP…ETAS), 129–182 (NGHI…ILAD), 198–245 (TRPQ…PVEG), and 293–573 (ATHE…IPGP). A phosphoserine mark is found at serine 13 and serine 68. Over residues 199–233 (RPQEAKGQEEQSPGLEDKDLDFKDKDSEVSTKPEG) the composition is skewed to basic and acidic residues. 3 positions are modified to phosphoserine: serine 210, serine 241, and serine 325. Over residues 326–339 (PGSVTPPSSGTEPS) the composition is skewed to low complexity. Phosphoserine is present on residues serine 348 and serine 350. Positions 393-406 (IPSSLDQEASSAES) are enriched in polar residues. Residue serine 485 is modified to Phosphoserine. Over residues 495 to 510 (AIREETSSRATEERAP) the composition is skewed to basic and acidic residues. Residues 525-534 (TPVTLQSRPE) are compositionally biased toward polar residues. In terms of domain architecture, Reticulon spans 590–777 (AIDLLYWRDI…KIPGAKRHAE (188 aa)). Helical transmembrane passes span 604–624 (IVFGSFLLLLFSLTQFSVVSV) and 706–726 (FAVLMWLLTYVGALFNGLTLL).

Interacts with NDRG1. Interacts with BACE1. Interacts with TMEM33. As to quaternary structure, interacts with UGCG; regulates the ceramide glucosyltransferase activity of UGCG. In terms of tissue distribution, expressed predominantly in central and peripheral nervous system of newborn and adult rats. Low levels have been also detected in heart, adrenal gland and spleen. Expression of isoform RTN1-B is restricted to particular neuronal types.

The protein resides in the endoplasmic reticulum membrane. The protein localises to the golgi apparatus membrane. Functionally, inhibits amyloid precursor protein processing, probably by blocking BACE1 activity. This chain is Reticulon-1 (Rtn1), found in Rattus norvegicus (Rat).